An 854-amino-acid chain; its full sequence is Armadillo repeat-containing protein 2 (854 aa).

Disordered regions lie at residues 1–116, 140–194, and 206–255; these read MLSS…SFPK, QGML…PLLT, and EVSL…ETDT. A compositionally biased stretch (low complexity) spans 58 to 73; that stretch reads PASSRSPENRPPSSFS. Polar residues-rich tracts occupy residues 74 to 87 and 162 to 187; these read LHAS…SKPI and KPVS…TGQL. ARM repeat units follow at residues 255–294, 298–337, 356–396, 401–442, 455–496, 499–540, 544–583, 585–605, 606–649, 651–692, 694–733, and 735–777; these read TEVD…RTLE, MLGK…ALKV, EKND…ALKF, PGFL…HLLV, PLTR…KLTS, DCCA…NLTA, QARE…EAKP, AEAE…AIHP, RIGP…NLSF, QVKS…NLSQ, HDVC…NLTV, and KEKR…NFSE.

In terms of biological role, required for sperm flagellum axoneme organization and function. Involved in axonemal central pair complex assembly and/or stability. This chain is Armadillo repeat-containing protein 2, found in Mus musculus (Mouse).